The chain runs to 370 residues: DNA primase small subunit PriS (370 aa).

Catalysis depends on residues aspartate 92, aspartate 94, and aspartate 272.

The protein belongs to the eukaryotic-type primase small subunit family. In terms of assembly, heterodimer of a small subunit (PriS) and a large subunit (PriL). It depends on Mg(2+) as a cofactor. Mn(2+) is required as a cofactor.

In terms of biological role, catalytic subunit of DNA primase, an RNA polymerase that catalyzes the synthesis of short RNA molecules used as primers for DNA polymerase during DNA replication. The small subunit contains the primase catalytic core and has DNA synthesis activity on its own. Binding to the large subunit stabilizes and modulates the activity, increasing the rate of DNA synthesis while decreasing the length of the DNA fragments, and conferring RNA synthesis capability. The DNA polymerase activity may enable DNA primase to also catalyze primer extension after primer synthesis. May also play a role in DNA repair. The sequence is that of DNA primase small subunit PriS from Picrophilus torridus (strain ATCC 700027 / DSM 9790 / JCM 10055 / NBRC 100828 / KAW 2/3).